We begin with the raw amino-acid sequence, 64 residues long: Cytochrome b-c1 complex subunit 9 (64 aa).

Residues 2 to 18 (SSPTIPSRLYSLLFRRT) lie on the Mitochondrial matrix side of the membrane. The chain crosses the membrane as a helical span at residues 19-43 (STFALTIAVGALFFERAFDQGADAI). Residues 44-63 (YEHINEGKLWKHIKHKYENK) are Mitochondrial intermembrane-facing.

This sequence belongs to the UQCR10/QCR9 family. As to quaternary structure, component of the ubiquinol-cytochrome c oxidoreductase (cytochrome b-c1 complex, complex III, CIII), a multisubunit enzyme composed of 11 subunits. The complex is composed of 3 respiratory subunits cytochrome b, cytochrome c1 and Rieske protein UQCRFS1, 2 core protein subunits UQCRC1/QCR1 and UQCRC2/QCR2, and 6 low-molecular weight protein subunits UQCRH/QCR6, UQCRB/QCR7, UQCRQ/QCR8, UQCR10/QCR9, UQCR11/QCR10 and subunit 9, the cleavage product of Rieske protein UQCRFS1. The complex exists as an obligatory dimer and forms supercomplexes (SCs) in the inner mitochondrial membrane with NADH-ubiquinone oxidoreductase (complex I, CI) and cytochrome c oxidase (complex IV, CIV), resulting in different assemblies (supercomplex SCI(1)III(2)IV(1) and megacomplex MCI(2)III(2)IV(2)). Interacts with STMP1.

Its subcellular location is the mitochondrion inner membrane. Component of the ubiquinol-cytochrome c oxidoreductase, a multisubunit transmembrane complex that is part of the mitochondrial electron transport chain which drives oxidative phosphorylation. The respiratory chain contains 3 multisubunit complexes succinate dehydrogenase (complex II, CII), ubiquinol-cytochrome c oxidoreductase (cytochrome b-c1 complex, complex III, CIII) and cytochrome c oxidase (complex IV, CIV), that cooperate to transfer electrons derived from NADH and succinate to molecular oxygen, creating an electrochemical gradient over the inner membrane that drives transmembrane transport and the ATP synthase. The cytochrome b-c1 complex catalyzes electron transfer from ubiquinol to cytochrome c, linking this redox reaction to translocation of protons across the mitochondrial inner membrane, with protons being carried across the membrane as hydrogens on the quinol. In the process called Q cycle, 2 protons are consumed from the matrix, 4 protons are released into the intermembrane space and 2 electrons are passed to cytochrome c. This Mus musculus (Mouse) protein is Cytochrome b-c1 complex subunit 9 (Uqcr10).